The following is a 144-amino-acid chain: MNFKYIFAVSFLIASAYARSVQNDEQSLSQRDVLEEESLREIRGIGGKILSGLKTALKGAAKELASTYLHRKRTAEEHEEMKRLEAVMRDLDSLDYPEEASERETRGFNQDEIANLFTKKEKRILGPVLGLVSDTLDDVLGILG.

A signal peptide spans 1 to 18 (MNFKYIFAVSFLIASAYA). 2 propeptides span residues 19–43 (RSVQNDEQSLSQRDVLEEESLREIR) and 74–123 (TAEE…KEKR). At L143 the chain carries Leucine amide.

It belongs to the bombinin family. Expressed by the skin glands.

It localises to the secreted. Maximin-3 shows antibacterial activity against both Gram-positive and Gram-negative bacteria. It also shows antimicrobial activity against the fungus C.albicans, but not against A.flavus nor P.uticale. It has little hemolytic activity. It possess a significant cytotoxicity against tumor cell lines. It possess a significant anti-HIV activity. It shows high spermicidal activity. Its function is as follows. Maximin-H5 shows antibacterial activity only against the Gram-positive bacteria S.aureus. The other bacterial and fungal strains tested were resistant to it. The presence of metal ions, like Zn(2+) and Mg(2+), did not increase its antimicrobial potency. Does not show hemolytic activity (in a concentration up to 80 uM). The chain is Maximins 3/H5 from Bombina maxima (Giant fire-bellied toad).